The chain runs to 872 residues: Alanine--tRNA ligase (872 aa).

Histidine 567, histidine 571, cysteine 669, and histidine 673 together coordinate Zn(2+).

Belongs to the class-II aminoacyl-tRNA synthetase family. Requires Zn(2+) as cofactor.

It is found in the cytoplasm. It carries out the reaction tRNA(Ala) + L-alanine + ATP = L-alanyl-tRNA(Ala) + AMP + diphosphate. Functionally, catalyzes the attachment of alanine to tRNA(Ala) in a two-step reaction: alanine is first activated by ATP to form Ala-AMP and then transferred to the acceptor end of tRNA(Ala). Also edits incorrectly charged Ser-tRNA(Ala) and Gly-tRNA(Ala) via its editing domain. The sequence is that of Alanine--tRNA ligase from Streptococcus agalactiae serotype V (strain ATCC BAA-611 / 2603 V/R).